We begin with the raw amino-acid sequence, 394 residues long: Phosphoglycerate kinase (394 aa).

Substrate-binding positions include 21 to 23, Arg36, 59 to 62, Arg118, and Arg151; these read DFN and HLGR. Ser183 carries the phosphoserine modification. Residue Lys201 coordinates ATP. A Phosphothreonine modification is found at Thr299. Residues Glu323 and 350-353 contribute to the ATP site; that span reads GGDS.

This sequence belongs to the phosphoglycerate kinase family. In terms of assembly, monomer.

It is found in the cytoplasm. The enzyme catalyses (2R)-3-phosphoglycerate + ATP = (2R)-3-phospho-glyceroyl phosphate + ADP. Its pathway is carbohydrate degradation; glycolysis; pyruvate from D-glyceraldehyde 3-phosphate: step 2/5. This Shouchella clausii (strain KSM-K16) (Alkalihalobacillus clausii) protein is Phosphoglycerate kinase.